Here is a 486-residue protein sequence, read N- to C-terminus: Ribosomal RNA small subunit methyltransferase F (486 aa).

Residues 124 to 130 (ASAPGSK), E148, D175, and D193 each bind S-adenosyl-L-methionine. C246 acts as the Nucleophile in catalysis.

The protein belongs to the class I-like SAM-binding methyltransferase superfamily. RsmB/NOP family.

The protein resides in the cytoplasm. The catalysed reaction is cytidine(1407) in 16S rRNA + S-adenosyl-L-methionine = 5-methylcytidine(1407) in 16S rRNA + S-adenosyl-L-homocysteine + H(+). Functionally, specifically methylates the cytosine at position 1407 (m5C1407) of 16S rRNA. This is Ribosomal RNA small subunit methyltransferase F from Shewanella baltica (strain OS195).